Here is a 141-residue protein sequence, read N- to C-terminus: Hemoglobin subunit alpha-D/D' (141 aa).

Positions 1–141 (MLTADDKKLI…VAAVLAEKYR (141 aa)) constitute a Globin domain. Residues His-58 and His-87 each coordinate heme b.

The protein belongs to the globin family. Heterotetramer of two alpha-D chains and two beta chains. Red blood cells.

Its function is as follows. Involved in oxygen transport from the lung to the various peripheral tissues. In Gyps rueppelli (Rueppell's griffon), this protein is Hemoglobin subunit alpha-D/D' (HBAD).